Here is a 93-residue protein sequence, read N- to C-terminus: Molybdopterin synthase sulfur carrier subunit (93 aa).

Gly93 carries the post-translational modification 1-thioglycine; alternate. Glycyl adenylate; alternate is present on Gly93.

The protein belongs to the MoaD family. MOCS2A subfamily. Heterotetramer; composed of 2 small (MOCS2A) and 2 large (MOCS2B) subunits. C-terminal thiocarboxylation occurs in 2 steps, it is first acyl-adenylated (-COAMP) via the hesA/moeB/thiF part of uba4, then thiocarboxylated (-COSH) via the rhodanese domain of uba4.

It localises to the cytoplasm. It participates in cofactor biosynthesis; molybdopterin biosynthesis. Functionally, acts as a sulfur carrier required for molybdopterin biosynthesis. Component of the molybdopterin synthase complex that catalyzes the conversion of precursor Z into molybdopterin by mediating the incorporation of 2 sulfur atoms into precursor Z to generate a dithiolene group. In the complex, serves as sulfur donor by being thiocarboxylated (-COSH) at its C-terminus by uba4. After interaction with MOCS2B, the sulfur is then transferred to precursor Z to form molybdopterin. This chain is Molybdopterin synthase sulfur carrier subunit, found in Pyrenophora tritici-repentis (strain Pt-1C-BFP) (Wheat tan spot fungus).